Here is a 431-residue protein sequence, read N- to C-terminus: Na(+)-translocating NADH-quinone reductase subunit F (431 aa).

The helical transmembrane segment at 9 to 29 (FICIASLIFCAIGVILAGVIL) threads the bilayer. The 95-residue stretch at 39–133 (HPCKLKINDN…DMSLEIEERY (95 aa)) folds into the 2Fe-2S ferredoxin-type domain. Residues Cys-76, Cys-82, Cys-85, and Cys-117 each contribute to the [2Fe-2S] cluster site. One can recognise an FAD-binding FR-type domain in the interval 136 to 286 (ASSWEGTVIS…SGPYGESFMK (151 aa)). The segment at 289–413 (DRPLIFLIGG…PLHNSSILKL (125 aa)) is catalytic.

It belongs to the NqrF family. In terms of assembly, composed of six subunits; NqrA, NqrB, NqrC, NqrD, NqrE and NqrF. It depends on [2Fe-2S] cluster as a cofactor. FAD is required as a cofactor.

It is found in the cell inner membrane. It catalyses the reaction a ubiquinone + n Na(+)(in) + NADH + H(+) = a ubiquinol + n Na(+)(out) + NAD(+). NQR complex catalyzes the reduction of ubiquinone-1 to ubiquinol by two successive reactions, coupled with the transport of Na(+) ions from the cytoplasm to the periplasm. The first step is catalyzed by NqrF, which accepts electrons from NADH and reduces ubiquinone-1 to ubisemiquinone by a one-electron transfer pathway. The chain is Na(+)-translocating NADH-quinone reductase subunit F from Chlamydia pneumoniae (Chlamydophila pneumoniae).